Here is a 396-residue protein sequence, read N- to C-terminus: Probable sugar efflux transporter (396 aa).

Over 1–14 (MTINPVSRKVAWLR) the chain is Cytoplasmic. The chain crosses the membrane as a helical span at residues 15-35 (VVTLAIAAFIFNTTEFVPVGL). The Periplasmic segment spans residues 36–49 (LSDIAESFHMQTAQ). The helical transmembrane segment at 50–70 (VGIMLTIYAWVVAVMSLPFML) threads the bilayer. Topologically, residues 71–80 (LTSQMERRKL) are cytoplasmic. Residues 81–101 (LIYLFVLFIASHVLSFLAWNF) form a helical membrane-spanning segment. A topological domain (periplasmic) is located at residue Thr102. The chain crosses the membrane as a helical span at residues 103 to 123 (VLVISRIGIAFAHAIFWSITA). Residues 124–135 (SLAIRLAPAGKR) are Cytoplasmic-facing. A helical transmembrane segment spans residues 136 to 156 (AQALSLIATGTALAMVLGLPI). The Periplasmic segment spans residues 157–168 (GRVVGQYFGWRT). A helical membrane pass occupies residues 169 to 189 (TFFAIGMGALITLLCLIKLLP). Residues 190–208 (KLPSEHSGSLKSLPLLFRR) lie on the Cytoplasmic side of the membrane. Residues 209-229 (PALMSLYVLTVVVVTAHYTAY) form a helical membrane-spanning segment. Residues 230–245 (SYIEPFVQNVAGLSAN) lie on the Periplasmic side of the membrane. The helical transmembrane segment at 246–266 (FATVLLLILGGAGIIGSLVFG) threads the bilayer. Residues 267–274 (KLGNRHAS) lie on the Cytoplasmic side of the membrane. The helical transmembrane segment at 275-295 (SLVSIAIALLVVCLLLLLPAA) threads the bilayer. Residues 296–300 (ESEAH) are Periplasmic-facing. A helical transmembrane segment spans residues 301–321 (LAILSIFWGIAIMVIGLGMQV). Topologically, residues 322–332 (KVLALAPDATD) are cytoplasmic. Residues 333–353 (VAMALFSGIFNIGIGAGALVG) traverse the membrane as a helical segment. Over 354–363 (NQVSLHWSMS) the chain is Periplasmic. A helical transmembrane segment spans residues 364–384 (AIGYIGAIPACAALVWAVLIF). The Cytoplasmic portion of the chain corresponds to 385–396 (RKWPVTLEEQPH).

This sequence belongs to the major facilitator superfamily. SotB (TC 2.A.1.2) family.

It localises to the cell inner membrane. In terms of biological role, involved in the efflux of sugars. The physiological role may be the reduction of the intracellular concentration of toxic sugars or sugar metabolites. The protein is Probable sugar efflux transporter of Salmonella typhimurium (strain LT2 / SGSC1412 / ATCC 700720).